Reading from the N-terminus, the 96-residue chain is UPF0235 protein VV2877 (96 aa).

This sequence belongs to the UPF0235 family.

This is UPF0235 protein VV2877 from Vibrio vulnificus (strain YJ016).